The chain runs to 317 residues: Ribosomal protein L11 methyltransferase (317 aa).

S-adenosyl-L-methionine contacts are provided by Thr139, Gly162, Asp184, and Asn226. A disordered region spans residues 274–297 (EHVATRPDPASPGGDRRAGRGDAG).

The protein belongs to the methyltransferase superfamily. PrmA family.

The protein localises to the cytoplasm. It catalyses the reaction L-lysyl-[protein] + 3 S-adenosyl-L-methionine = N(6),N(6),N(6)-trimethyl-L-lysyl-[protein] + 3 S-adenosyl-L-homocysteine + 3 H(+). In terms of biological role, methylates ribosomal protein L11. The sequence is that of Ribosomal protein L11 methyltransferase from Sorangium cellulosum (strain So ce56) (Polyangium cellulosum (strain So ce56)).